The sequence spans 195 residues: FMN-dependent NADH:quinone oxidoreductase (195 aa).

FMN contacts are provided by residues serine 9, 15-17 (SVS), 85-88 (MYNF), and 129-132 (SRGG).

It belongs to the azoreductase type 1 family. Homodimer. FMN serves as cofactor.

The catalysed reaction is 2 a quinone + NADH + H(+) = 2 a 1,4-benzosemiquinone + NAD(+). It carries out the reaction N,N-dimethyl-1,4-phenylenediamine + anthranilate + 2 NAD(+) = 2-(4-dimethylaminophenyl)diazenylbenzoate + 2 NADH + 2 H(+). In terms of biological role, quinone reductase that provides resistance to thiol-specific stress caused by electrophilic quinones. Also exhibits azoreductase activity. Catalyzes the reductive cleavage of the azo bond in aromatic azo compounds to the corresponding amines. This Stenotrophomonas maltophilia (strain K279a) protein is FMN-dependent NADH:quinone oxidoreductase.